The chain runs to 320 residues: Esterase LipI (320 aa).

Residues Ser165, Asp261, and His291 contribute to the active site.

The protein belongs to the 'GDXG' lipolytic enzyme family.

The enzyme catalyses a fatty acid ester + H2O = an aliphatic alcohol + a fatty acid + H(+). It carries out the reaction a butanoate ester + H2O = an aliphatic alcohol + butanoate + H(+). The catalysed reaction is an octanoate ester + H2O = an aliphatic alcohol + octanoate + H(+). It catalyses the reaction decanoate ester + H2O = decanoate + an aliphatic alcohol + H(+). The enzyme catalyses an acetyl ester + H2O = an aliphatic alcohol + acetate + H(+). It carries out the reaction a dodecanoate ester + H2O = an aliphatic alcohol + dodecanoate + H(+). Its activity is regulated as follows. Inhibited by ionic detergents SDS (anions) and CTAB (cationic). Strongly inhibited by Zn(2+). In terms of biological role, esterase that can hydrolyze short-chain esters with the carbon chain containing 2 to 12 carbon atoms. In vitro, pNP-butyrate is the preferred substrate. The polypeptide is Esterase LipI (Mycobacterium tuberculosis (strain ATCC 25618 / H37Rv)).